Here is a 119-residue protein sequence, read N- to C-terminus: Large ribosomal subunit protein bL20 (119 aa).

Belongs to the bacterial ribosomal protein bL20 family.

Functionally, binds directly to 23S ribosomal RNA and is necessary for the in vitro assembly process of the 50S ribosomal subunit. It is not involved in the protein synthesizing functions of that subunit. The sequence is that of Large ribosomal subunit protein bL20 from Albidiferax ferrireducens (strain ATCC BAA-621 / DSM 15236 / T118) (Rhodoferax ferrireducens).